A 482-amino-acid chain; its full sequence is Catalase (482 aa).

Residues 1 to 11 show a composition bias toward polar residues; it reads MNAMTNKTLTT. The disordered stretch occupies residues 1 to 21; that stretch reads MNAMTNKTLTTAAGAPVADNN. Residues His-57 and Asn-130 contribute to the active site. Tyr-340 contributes to the heme binding site.

It belongs to the catalase family. Homodimer. Heme is required as a cofactor.

The catalysed reaction is 2 H2O2 = O2 + 2 H2O. Functionally, decomposes hydrogen peroxide into water and oxygen; serves to protect cells from the toxic effects of hydrogen peroxide. This is Catalase (katA) from Bordetella bronchiseptica (strain ATCC BAA-588 / NCTC 13252 / RB50) (Alcaligenes bronchisepticus).